A 427-amino-acid chain; its full sequence is Trigger factor (427 aa).

The 81-residue stretch at 160–240 (TDTVIGDVEK…VKEVKRLELP (81 aa)) folds into the PPIase FKBP-type domain.

Belongs to the FKBP-type PPIase family. Tig subfamily.

It localises to the cytoplasm. It carries out the reaction [protein]-peptidylproline (omega=180) = [protein]-peptidylproline (omega=0). Functionally, involved in protein export. Acts as a chaperone by maintaining the newly synthesized protein in an open conformation. Functions as a peptidyl-prolyl cis-trans isomerase. In Chlorobium phaeobacteroides (strain DSM 266 / SMG 266 / 2430), this protein is Trigger factor.